Consider the following 675-residue polypeptide: Cysteine-rich receptor-like protein kinase 25 (675 aa).

The signal sequence occupies residues 1–25 (MSSCFKSSVSLFSVFLFMILKTVTS). Residues 26–281 (DPTYLYHICP…IPSEKGKGKN (256 aa)) are Extracellular-facing. Gnk2-homologous domains are found at residues 28–134 (TYLY…NQSI) and 140–247 (IRPG…LYPF). N-linked (GlcNAc...) asparagine glycosylation is found at Asn-36, Asn-43, Asn-77, Asn-106, Asn-131, Asn-151, Asn-161, Asn-188, Asn-249, and Asn-281. The helical transmembrane segment at 282–302 (LTVIVTAIAVPVSVCVLLLGA) threads the bilayer. At 303–675 (MCWLLARRRN…DSSITIVYPR (373 aa)) the chain is on the cytoplasmic side. In terms of domain architecture, Protein kinase spans 347–622 (FSESNKLGHG…DILVMMNSFT (276 aa)). Residues 353–361 (LGHGGFGEV) and Lys-375 contribute to the ATP site. Tyr-420 carries the post-translational modification Phosphotyrosine. The active-site Proton acceptor is the Asp-472. Ser-476 is subject to Phosphoserine. Phosphothreonine is present on Thr-512. Tyr-520 carries the post-translational modification Phosphotyrosine. Positions 638 to 661 (MKDSRDPRSGGSASDHSATSKSLP) are disordered. Over residues 648–661 (GSASDHSATSKSLP) the composition is skewed to polar residues.

Belongs to the protein kinase superfamily. Ser/Thr protein kinase family. CRK subfamily.

The protein localises to the membrane. The catalysed reaction is L-seryl-[protein] + ATP = O-phospho-L-seryl-[protein] + ADP + H(+). It catalyses the reaction L-threonyl-[protein] + ATP = O-phospho-L-threonyl-[protein] + ADP + H(+). The polypeptide is Cysteine-rich receptor-like protein kinase 25 (CRK25) (Arabidopsis thaliana (Mouse-ear cress)).